The primary structure comprises 267 residues: Transmembrane protein 106B (267 aa).

Over 1-92 (MGKALSHVAK…QRLRPRRTKL (92 aa)) the chain is Cytoplasmic. The chain crosses the membrane as a helical span at residues 93–113 (YVMASVILCLLLCTLAVFFLF). Residues 114–267 (PRSIDVNYVG…EYSLNTPLTG (154 aa)) lie on the Lumenal side of the membrane. N-linked (GlcNAc...) asparagine glycans are attached at residues asparagine 141, asparagine 147, asparagine 160, and asparagine 179. Cysteine 210 and cysteine 249 are disulfide-bonded. N-linked (GlcNAc...) asparagine glycosylation is present at asparagine 252.

Belongs to the TMEM106 family.

It is found in the late endosome membrane. Its subcellular location is the lysosome membrane. The protein localises to the cell membrane. In terms of biological role, in neurons, involved in the transport of late endosomes/lysosomes. May be involved in dendrite morphogenesis and maintenance by regulating lysosomal trafficking. May act as a molecular brake for retrograde transport of late endosomes/lysosomes, possibly via its interaction with MAP6. In motoneurons, may mediate the axonal transport of lysosomes and axonal sorting at the initial segment. It remains unclear whether TMEM106B affects the transport of moving lysosomes in the anterograde or retrograde direction in neurites and whether it is particularly important in the sorting of lysosomes in axons or in dendrites. In neurons, may also play a role in the regulation of lysosomal size and responsiveness to stress. Required for proper lysosomal acidification. In Danio rerio (Zebrafish), this protein is Transmembrane protein 106B (tmem106b).